A 320-amino-acid polypeptide reads, in one-letter code: Glutaminyl-peptide cyclotransferase (320 aa).

Positions 1 to 12 (MATRSPYKRQTK) are enriched in basic residues. A disordered region spans residues 1 to 22 (MATRSPYKRQTKRSMIQSLPAS). The Cytoplasmic segment spans residues 1–36 (MATRSPYKRQTKRSMIQSLPASSSASSRRRFISRKR). The helical; Signal-anchor for type II membrane protein transmembrane segment at 37–57 (FAMMIPLALLSGAVFLFFMPF) threads the bilayer. Residues 58-320 (NSWGQSSGSS…GNYIEQQCLV (263 aa)) lie on the Lumenal side of the membrane. 2 N-linked (GlcNAc...) asparagine glycosylation sites follow: N99 and N163.

The protein belongs to the plant glutaminyl-peptide cyclotransferase family. In terms of processing, glycosylated.

It localises to the endoplasmic reticulum membrane. The enzyme catalyses N-terminal L-glutaminyl-[peptide] = N-terminal 5-oxo-L-prolyl-[peptide] + NH4(+). Its function is as follows. Converts glutamine and N-terminal glutamyl residues in peptides to 5-oxoproline and 5-oxoproline residues. Not involved in the major pathway for 5-oxoproline production. The polypeptide is Glutaminyl-peptide cyclotransferase (QCT) (Arabidopsis thaliana (Mouse-ear cress)).